Reading from the N-terminus, the 164-residue chain is NADH-quinone oxidoreductase subunit C (164 aa).

Belongs to the complex I 30 kDa subunit family. In terms of assembly, NDH-1 is composed of 14 different subunits. Subunits NuoB, C, D, E, F, and G constitute the peripheral sector of the complex.

It is found in the cell inner membrane. The enzyme catalyses a quinone + NADH + 5 H(+)(in) = a quinol + NAD(+) + 4 H(+)(out). Its function is as follows. NDH-1 shuttles electrons from NADH, via FMN and iron-sulfur (Fe-S) centers, to quinones in the respiratory chain. The immediate electron acceptor for the enzyme in this species is believed to be ubiquinone. Couples the redox reaction to proton translocation (for every two electrons transferred, four hydrogen ions are translocated across the cytoplasmic membrane), and thus conserves the redox energy in a proton gradient. The chain is NADH-quinone oxidoreductase subunit C from Geotalea uraniireducens (strain Rf4) (Geobacter uraniireducens).